The following is a 158-amino-acid chain: NAD(P)H-quinone oxidoreductase subunit J, chloroplastic (158 aa).

This sequence belongs to the complex I 30 kDa subunit family. As to quaternary structure, NDH is composed of at least 16 different subunits, 5 of which are encoded in the nucleus.

The protein localises to the plastid. It localises to the chloroplast thylakoid membrane. The enzyme catalyses a plastoquinone + NADH + (n+1) H(+)(in) = a plastoquinol + NAD(+) + n H(+)(out). It catalyses the reaction a plastoquinone + NADPH + (n+1) H(+)(in) = a plastoquinol + NADP(+) + n H(+)(out). Functionally, NDH shuttles electrons from NAD(P)H:plastoquinone, via FMN and iron-sulfur (Fe-S) centers, to quinones in the photosynthetic chain and possibly in a chloroplast respiratory chain. The immediate electron acceptor for the enzyme in this species is believed to be plastoquinone. Couples the redox reaction to proton translocation, and thus conserves the redox energy in a proton gradient. The polypeptide is NAD(P)H-quinone oxidoreductase subunit J, chloroplastic (Olimarabidopsis pumila (Dwarf rocket)).